The chain runs to 411 residues: Alpha-galactosidase (411 aa).

The first 24 residues, Met1–Gly24, serve as a signal peptide directing secretion. A propeptide spanning residues Gly25–Leu47 is cleaved from the precursor. A glycan (N-linked (GlcNAc...) asparagine) is linked at Asn32. Residues Cys68 and Cys100 are joined by a disulfide bond. N-linked (GlcNAc...) asparagine glycosylation is present at Asn145. Residues Cys148 and Cys179 are joined by a disulfide bond. Asp177 serves as the catalytic Nucleophile. Position 210–214 (Glu210–Glu214) interacts with substrate. Asp232 functions as the Proton donor in the catalytic mechanism. The N-linked (GlcNAc...) asparagine glycan is linked to Asn352.

It belongs to the glycosyl hydrolase 27 family.

The catalysed reaction is Hydrolysis of terminal, non-reducing alpha-D-galactose residues in alpha-D-galactosides, including galactose oligosaccharides, galactomannans and galactolipids.. Functionally, involved in the hydrolysis of the galactomannan, it splits alpha-linked galactose moieties. It is particularly suitable for the hydrolysis of guar gum to a gum with improved gelling properties. Preferentially cleaves alpha-1,6 glycoside linkages. This Cyamopsis tetragonoloba (Guar) protein is Alpha-galactosidase.